The primary structure comprises 209 residues: Large ribosomal subunit protein bL25 (209 aa).

Residues 188–209 form a disordered region; that stretch reads STSMEKEGEGSQEPTAAPSSEN. Over residues 199 to 209 the composition is skewed to polar residues; it reads QEPTAAPSSEN.

This sequence belongs to the bacterial ribosomal protein bL25 family. CTC subfamily. As to quaternary structure, part of the 50S ribosomal subunit; part of the 5S rRNA/L5/L18/L25 subcomplex. Contacts the 5S rRNA. Binds to the 5S rRNA independently of L5 and L18.

This is one of the proteins that binds to the 5S RNA in the ribosome where it forms part of the central protuberance. The sequence is that of Large ribosomal subunit protein bL25 from Ehrlichia canis (strain Jake).